Reading from the N-terminus, the 388-residue chain is 4-hydroxycoumarin synthase 2 (388 aa).

Cys-159 is an active-site residue.

The protein belongs to the thiolase-like superfamily. Chalcone/stilbene synthases family. In terms of assembly, homodimer.

The catalysed reaction is 2-hydroxybenzoyl-CoA + malonyl-CoA = 4-hydroxycoumarin + CO2 + 2 CoA. In terms of biological role, type III polyketide synthase involved preferentially in the biosynthesis of 4-hydroxycoumarin from salicoyl-CoA. Can also use benzoyl-CoA and malonyl-CoA to produce 3,5-dihydroxybiphenyl as a major product and benzoyldiacetic acid lactone as a minor side product. Can also use m-hydroxybenzoyl-CoA as substrate, producing m-hydroxybenzoyl diacetic acid lactone as a derailment product. No activity with p-hydroxybenzoyl-CoA, CoA-linked cinnamic acids or acetyl-CoA. The protein is 4-hydroxycoumarin synthase 2 (BIS3) of Sorbus aucuparia (European mountain ash).